We begin with the raw amino-acid sequence, 376 residues long: Succinyl-diaminopimelate desuccinylase (376 aa).

Position 67 (histidine 67) interacts with Zn(2+). Residue aspartate 69 is part of the active site. A Zn(2+)-binding site is contributed by aspartate 100. Glutamate 134 acts as the Proton acceptor in catalysis. 3 residues coordinate Zn(2+): glutamate 135, glutamate 163, and histidine 349.

This sequence belongs to the peptidase M20A family. DapE subfamily. In terms of assembly, homodimer. The cofactor is Zn(2+). Co(2+) is required as a cofactor.

The catalysed reaction is N-succinyl-(2S,6S)-2,6-diaminopimelate + H2O = (2S,6S)-2,6-diaminopimelate + succinate. Its pathway is amino-acid biosynthesis; L-lysine biosynthesis via DAP pathway; LL-2,6-diaminopimelate from (S)-tetrahydrodipicolinate (succinylase route): step 3/3. Functionally, catalyzes the hydrolysis of N-succinyl-L,L-diaminopimelic acid (SDAP), forming succinate and LL-2,6-diaminopimelate (DAP), an intermediate involved in the bacterial biosynthesis of lysine and meso-diaminopimelic acid, an essential component of bacterial cell walls. This chain is Succinyl-diaminopimelate desuccinylase, found in Idiomarina loihiensis (strain ATCC BAA-735 / DSM 15497 / L2-TR).